The chain runs to 538 residues: C-22 sterol desaturase ERG5 (538 aa).

Residues 46 to 66 (LKIFATLICILLVWDQVAYQI) form a helical membrane-spanning segment. Glycyl lysine isopeptide (Lys-Gly) (interchain with G-Cter in ubiquitin) cross-links involve residues K164 and K198. C476 serves as a coordination point for heme.

Belongs to the cytochrome P450 family. Interacts with ERG28. Heme is required as a cofactor.

The protein resides in the endoplasmic reticulum membrane. It carries out the reaction 5-dehydroepisterol + NADPH + O2 + H(+) = ergosta-5,7,22,24(28)-tetraen-3beta-ol + NADP(+) + 2 H2O. It participates in steroid metabolism; ergosterol biosynthesis; ergosterol from zymosterol: step 4/5. Functionally, C-22 sterol desaturase; part of the third module of ergosterol biosynthesis pathway that includes the late steps of the pathway. ERG5 converts 5-dehydroepisterol into ergosta-5,7,22,24(28)-tetraen-3beta-ol by forming the C-22(23) double bond in the sterol side chain. The third module or late pathway involves the ergosterol synthesis itself through consecutive reactions that mainly occur in the endoplasmic reticulum (ER) membrane. Firstly, the squalene synthase ERG9 catalyzes the condensation of 2 farnesyl pyrophosphate moieties to form squalene, which is the precursor of all steroids. Squalene synthase is crucial for balancing the incorporation of farnesyl diphosphate (FPP) into sterol and nonsterol isoprene synthesis. Secondly, the squalene epoxidase ERG1 catalyzes the stereospecific oxidation of squalene to (S)-2,3-epoxysqualene, which is considered to be a rate-limiting enzyme in steroid biosynthesis. Then, the lanosterol synthase ERG7 catalyzes the cyclization of (S)-2,3 oxidosqualene to lanosterol, a reaction that forms the sterol core. In the next steps, lanosterol is transformed to zymosterol through a complex process involving various demethylation, reduction and desaturation reactions. The lanosterol 14-alpha-demethylase ERG11 (also known as CYP51) catalyzes C14-demethylation of lanosterol to produce 4,4'-dimethyl cholesta-8,14,24-triene-3-beta-ol, which is critical for ergosterol biosynthesis. The C-14 reductase ERG24 reduces the C14=C15 double bond of 4,4-dimethyl-cholesta-8,14,24-trienol to produce 4,4-dimethyl-cholesta-8,24-dienol. 4,4-dimethyl-cholesta-8,24-dienol is substrate of the C-4 demethylation complex ERG25-ERG26-ERG27 in which ERG25 catalyzes the three-step monooxygenation required for the demethylation of 4,4-dimethyl and 4alpha-methylsterols, ERG26 catalyzes the oxidative decarboxylation that results in a reduction of the 3-beta-hydroxy group at the C-3 carbon to an oxo group, and ERG27 is responsible for the reduction of the keto group on the C-3. ERG28 has a role as a scaffold to help anchor ERG25, ERG26 and ERG27 to the endoplasmic reticulum and ERG29 regulates the activity of the iron-containing C4-methylsterol oxidase ERG25. Then, the sterol 24-C-methyltransferase ERG6 catalyzes the methyl transfer from S-adenosyl-methionine to the C-24 of zymosterol to form fecosterol. The C-8 sterol isomerase ERG2 catalyzes the reaction which results in unsaturation at C-7 in the B ring of sterols and thus converts fecosterol to episterol. The sterol-C5-desaturase ERG3 then catalyzes the introduction of a C-5 double bond in the B ring to produce 5-dehydroepisterol. The C-22 sterol desaturase ERG5 further converts 5-dehydroepisterol into ergosta-5,7,22,24(28)-tetraen-3beta-ol by forming the C-22(23) double bond in the sterol side chain. Finally, ergosta-5,7,22,24(28)-tetraen-3beta-ol is substrate of the C-24(28) sterol reductase ERG4 to produce ergosterol. This Saccharomyces cerevisiae (strain ATCC 204508 / S288c) (Baker's yeast) protein is C-22 sterol desaturase ERG5.